The primary structure comprises 192 residues: Phosphoheptose isomerase (192 aa).

The 159-residue stretch at 34–192 (LADALGNGKK…LEKRLFGERR (159 aa)) folds into the SIS domain. 49–51 (NGG) serves as a coordination point for substrate. Residues His58 and Glu62 each coordinate Zn(2+). Residues Glu62, 91 to 92 (ND), 117 to 119 (STS), Ser122, and Gln169 each bind substrate. Zn(2+) contacts are provided by Gln169 and His177.

It belongs to the SIS family. GmhA subfamily. In terms of assembly, homotetramer. It depends on Zn(2+) as a cofactor.

The protein localises to the cytoplasm. It catalyses the reaction 2 D-sedoheptulose 7-phosphate = D-glycero-alpha-D-manno-heptose 7-phosphate + D-glycero-beta-D-manno-heptose 7-phosphate. The protein operates within carbohydrate biosynthesis; D-glycero-D-manno-heptose 7-phosphate biosynthesis; D-glycero-alpha-D-manno-heptose 7-phosphate and D-glycero-beta-D-manno-heptose 7-phosphate from sedoheptulose 7-phosphate: step 1/1. In terms of biological role, catalyzes the isomerization of sedoheptulose 7-phosphate in D-glycero-D-manno-heptose 7-phosphate. This Geotalea daltonii (strain DSM 22248 / JCM 15807 / FRC-32) (Geobacter daltonii) protein is Phosphoheptose isomerase.